Reading from the N-terminus, the 484-residue chain is Major capsid protein (484 aa).

Belongs to the NCLDV major capsid protein family. Homotrimer.

It localises to the virion. Its function is as follows. Major capsid protein that self assembles to form an icosahedral capsid. Represents around 50% of the total virion protein mass. The protein is Major capsid protein (MCP) of Wiseana iridescent virus (WIV).